Here is a 291-residue protein sequence, read N- to C-terminus: HTH-type transcriptional activator AmpR (291 aa).

One can recognise an HTH lysR-type domain in the interval 6-63; the sequence is IPLNSLRAFEAAARHLSFTRAAIELNVTHSAISQHVKSLEQQLNCQLFVRGSRGLMLT. A DNA-binding region (H-T-H motif) is located at residues 23–42; sequence FTRAAIELNVTHSAISQHVK.

Belongs to the LysR transcriptional regulatory family.

It is found in the cytoplasm. Regulates the expression of the beta-lactamase gene. Represses cephalosporinase (AmpC) in the presence of beta-lactams and induces it in the absence of them. This Citrobacter freundii protein is HTH-type transcriptional activator AmpR (ampR).